A 62-amino-acid polypeptide reads, in one-letter code: Omega-lycotoxin-Am1e (62 aa).

A propeptide spanning residues 1–15 (EDEVEETLPVAEEGR) is cleaved from the precursor. 4 disulfides stabilise this stretch: C19-C34, C26-C39, C33-C59, and C41-C57.

This sequence belongs to the neurotoxin omega-lctx family. Expressed by the venom gland.

The protein localises to the secreted. Modulates Cav2.1/CACNA1A voltage-gated calcium channels (P/Q-type currents) in rat cerebellar Purkinje cells and hippocampal CA1-CA3 neurons. At saturating concentrations (&gt;10 nM) decelerates activation kinetics and slightly increases peak amplitude without affecting deactivation kinetics. In vivo, does not cause death when intravenously injected into mice. In rat models, through its activity on Cav2.1/CACNA1A, has an ameliorative effect on memory defects provoked by hyperstimulation of N-methyl-D-aspartate receptors (NMDARs) in the hippocampus. This is Omega-lycotoxin-Am1e from Alopecosa marikovskyi (Wolf spider).